Here is a 136-residue protein sequence, read N- to C-terminus: MDSAVELSDPFDYIDHYFGYPVIGTEYSYEKLVNPSMLCEDKYFNLVGMMNYIIKNKTSDDDEKPGNSKIKSHTDQPPTTQTLSKSNYNVIFKIVIFIIIKCKRIKKKNRVNNPKIKTNNPNEEFENTGADSVVTQ.

Disordered stretches follow at residues 58-82 (TSDD…TTQT) and 112-136 (NNPK…VVTQ).

This is an uncharacterized protein from Dictyostelium discoideum (Social amoeba).